Here is a 496-residue protein sequence, read N- to C-terminus: Transmembrane protein 104 (496 aa).

The Cytoplasmic portion of the chain corresponds to 1-10 (MAGEITETGE). The chain crosses the membrane as a helical span at residues 11-31 (LYSPYVGLVYMFNLIVGTGAL). The Extracellular portion of the chain corresponds to 32–36 (TMPKA). The chain crosses the membrane as a helical span at residues 37 to 57 (FATAGWLVSLVLLVFVGFMSF). At 58–146 (VTTTFAMEAM…SMFFNKVGVN (89 aa)) the chain is on the cytoplasmic side. The tract at residues 81–100 (THKEEDDEDSSTASDSDLLS) is disordered. Low complexity predominate over residues 91–100 (STASDSDLLS). The chain crosses the membrane as a helical span at residues 147-167 (LFYFCIITYLYGDLAIYAAAV). Topologically, residues 168–204 (PVSLMQVTCSVSGNDSCGVDTDARYNDTDLCWGPLRR) are extracellular. The N-linked (GlcNAc...) asparagine glycan is linked to Asn-193. A helical membrane pass occupies residues 205–225 (VDVYRIYLAIFTVLLGPFTFF). At 226-233 (DVQKTKYL) the chain is on the cytoplasmic side. Residues 234 to 254 (QILTSMMRWIAFAIMIVLALV) form a helical membrane-spanning segment. The Extracellular segment spans residues 255–265 (RIGKGQGEGHP). A helical membrane pass occupies residues 266–286 (PLANFLGVQNLFGVCVYSFMC). Residues 287 to 306 (QHSLPSLITPISSKRHITRL) lie on the Cytoplasmic side of the membrane. The chain crosses the membrane as a helical span at residues 307-327 (LFLDYALILAFYGLLSFTAIF). The Extracellular portion of the chain corresponds to 328-354 (CFRGDSLMDMYTLNFARCDVVGLAAVR). Residues 355–375 (FFLGLFPVFTISTNFPIIAVT) traverse the membrane as a helical segment. Residues 376–397 (LRNNWKTLFHREGGTYPWVVDR) are Cytoplasmic-facing. The chain crosses the membrane as a helical span at residues 398-418 (VVFPTITLVPPILVAFCTHDL). The Extracellular segment spans residues 419-421 (ESL). Residues 422–442 (VAITGAYAGTGIQYVIPAFLV) traverse the membrane as a helical segment. Residues 443–470 (YLCRKDTQLTFGYGTVNKHRSPFRHTFW) lie on the Cytoplasmic side of the membrane. The chain crosses the membrane as a helical span at residues 471 to 491 (VAFVLLWAFSCFFFVTAYIVL). The Extracellular segment spans residues 492-496 (KETQL).

Belongs to the TMEM104 family.

The protein localises to the membrane. This chain is Transmembrane protein 104 (Tmem104), found in Mus musculus (Mouse).